The primary structure comprises 88 residues: Small ribosomal subunit protein bS21 (88 aa).

A disordered region spans residues 58 to 88; sequence ARKRAQREGLLPMTPRPVAAGGAAGAARPPR. Over residues 73 to 88 the composition is skewed to low complexity; that stretch reads RPVAAGGAAGAARPPR.

It belongs to the bacterial ribosomal protein bS21 family.

In Mesorhizobium japonicum (strain LMG 29417 / CECT 9101 / MAFF 303099) (Mesorhizobium loti (strain MAFF 303099)), this protein is Small ribosomal subunit protein bS21.